Here is a 368-residue protein sequence, read N- to C-terminus: Branched-chain-amino-acid aminotransferase (368 aa).

Position 101 (Arg-101) interacts with pyridoxal 5'-phosphate. Residue Lys-204 is modified to N6-(pyridoxal phosphate)lysine. Residues Tyr-209, 271 to 272 (IT), and Thr-314 each bind pyridoxal 5'-phosphate.

This sequence belongs to the class-IV pyridoxal-phosphate-dependent aminotransferase family. In terms of assembly, homodimer. Pyridoxal 5'-phosphate serves as cofactor.

The enzyme catalyses L-leucine + 2-oxoglutarate = 4-methyl-2-oxopentanoate + L-glutamate. The catalysed reaction is L-isoleucine + 2-oxoglutarate = (S)-3-methyl-2-oxopentanoate + L-glutamate. It carries out the reaction L-valine + 2-oxoglutarate = 3-methyl-2-oxobutanoate + L-glutamate. It functions in the pathway amino-acid biosynthesis; L-isoleucine biosynthesis; L-isoleucine from 2-oxobutanoate: step 4/4. It participates in amino-acid biosynthesis; L-leucine biosynthesis; L-leucine from 3-methyl-2-oxobutanoate: step 4/4. Its pathway is amino-acid biosynthesis; L-valine biosynthesis; L-valine from pyruvate: step 4/4. Functionally, catalyzes the reversible transfers of an amino group from glutamate to the alpha-ketoacid of the respective amino acid in the final step in the biosynthesis of branchedchain amino acids. The protein is Branched-chain-amino-acid aminotransferase (ilvE) of Mycobacterium tuberculosis (strain CDC 1551 / Oshkosh).